We begin with the raw amino-acid sequence, 464 residues long: Adenosylhomocysteinase (464 aa).

Substrate is bound by residues Thr-56, Asp-131, and Glu-190. 191 to 193 contacts NAD(+); the sequence is TTT. Substrate-binding residues include Lys-220 and Asp-224. NAD(+)-binding positions include Asn-225, 254–259, Glu-277, Asn-312, 333–335, and Asn-378; these read GFGDVG and IGH.

The protein belongs to the adenosylhomocysteinase family. Requires NAD(+) as cofactor.

The protein resides in the cytoplasm. It carries out the reaction S-adenosyl-L-homocysteine + H2O = L-homocysteine + adenosine. Its pathway is amino-acid biosynthesis; L-homocysteine biosynthesis; L-homocysteine from S-adenosyl-L-homocysteine: step 1/1. Its function is as follows. May play a key role in the regulation of the intracellular concentration of adenosylhomocysteine. The protein is Adenosylhomocysteinase of Zymomonas mobilis subsp. mobilis (strain ATCC 31821 / ZM4 / CP4).